The following is a 642-amino-acid chain: Threonine--tRNA ligase (642 aa).

The TGS domain maps to 1–61 (MPAITLPDGS…AADAQVVFVT (61 aa)). Positions 243-536 (DHRRLGKEMD…LIEQYAGRFP (294 aa)) are catalytic. Residues Cys336, His387, and His513 each coordinate Zn(2+).

It belongs to the class-II aminoacyl-tRNA synthetase family. In terms of assembly, homodimer. Zn(2+) serves as cofactor.

It localises to the cytoplasm. It catalyses the reaction tRNA(Thr) + L-threonine + ATP = L-threonyl-tRNA(Thr) + AMP + diphosphate + H(+). Functionally, catalyzes the attachment of threonine to tRNA(Thr) in a two-step reaction: L-threonine is first activated by ATP to form Thr-AMP and then transferred to the acceptor end of tRNA(Thr). Also edits incorrectly charged L-seryl-tRNA(Thr). In Granulibacter bethesdensis (strain ATCC BAA-1260 / CGDNIH1), this protein is Threonine--tRNA ligase.